A 482-amino-acid chain; its full sequence is BTB/POZ domain-containing protein 6-B (482 aa).

Residues 80–150 (ADVHFVVGPP…MYSDEIELEA (71 aa)) form the BTB domain.

Interacts with cul3. Interacts (via BTB domain) with zbtb16/plzf. In embryos, expressed in the cranial ganglia.

Its subcellular location is the cytoplasm. It is found in the nucleus. In terms of biological role, adapter protein for the cul3 E3 ubiquitin-protein ligase complex. Promotes the export of zbtb16/plzf from the nucleus to the cytoplasm and targets zbtb16/plzf for ubiquitination and degradation. Up-regulates neurog1 expression and antagonizes zbtb16/plzf, to promote neurogenesis. This Danio rerio (Zebrafish) protein is BTB/POZ domain-containing protein 6-B (btbd6b).